The sequence spans 490 residues: Bifunctional pantoate ligase/cytidylate kinase (490 aa).

1–8 is a binding site for ATP; it reads MGGLHQGH. The interval 1 to 253 is pantoate--beta-alanine ligase; the sequence is MGGLHQGHAR…CGETRLIDHV (253 aa). H8 (proton donor) is an active-site residue. Residue Q35 coordinates (R)-pantoate. Q35 serves as a coordination point for beta-alanine. 124 to 127 provides a ligand contact to ATP; that stretch reads GEKD. A (R)-pantoate-binding site is contributed by Q130. ATP is bound by residues V153 and 161–164; that span reads ASSR. Positions 254–490 are cytidylate kinase; it reads FIMTRSPIVA…AKEIWPTPQG (237 aa).

The protein in the N-terminal section; belongs to the pantothenate synthetase family. In the C-terminal section; belongs to the cytidylate kinase family. Type 1 subfamily.

The protein localises to the cytoplasm. The enzyme catalyses (R)-pantoate + beta-alanine + ATP = (R)-pantothenate + AMP + diphosphate + H(+). It carries out the reaction CMP + ATP = CDP + ADP. The catalysed reaction is dCMP + ATP = dCDP + ADP. It functions in the pathway cofactor biosynthesis; (R)-pantothenate biosynthesis; (R)-pantothenate from (R)-pantoate and beta-alanine: step 1/1. Functionally, catalyzes the condensation of pantoate with beta-alanine in an ATP-dependent reaction via a pantoyl-adenylate intermediate. Its function is as follows. Catalyzes the transfer of a phosphate group from ATP to either CMP or dCMP to form CDP or dCDP and ADP, respectively. The polypeptide is Bifunctional pantoate ligase/cytidylate kinase (Synechococcus sp. (strain WH7803)).